Consider the following 537-residue polypeptide: Tyrosine-protein kinase Fyn (537 aa).

G2 is lipidated: N-myristoyl glycine. Residues C3 and C6 are each lipidated (S-palmitoyl cysteine). A Phosphothreonine; by PKC modification is found at T12. Residues 82–143 enclose the SH3 domain; the sequence is TGVTLFVALY…PSNYVAPVDS (62 aa). Residues 149-246 enclose the SH2 domain; the sequence is WYFGKLGRKD…GLCCRLVVPC (98 aa). Positions 271–524 constitute a Protein kinase domain; the sequence is LQLIKRLGNG…YLQAFLEDYF (254 aa). Residues 277 to 285 and K299 contribute to the ATP site; that span reads LGNGQFGEV. D390 functions as the Proton acceptor in the catalytic mechanism. Position 420 is a phosphotyrosine; by autocatalysis (Y420). A Phosphotyrosine modification is found at Y531.

This sequence belongs to the protein kinase superfamily. Tyr protein kinase family. SRC subfamily. Associates through its SH3 domain, to the p85 subunit of phosphatidylinositol 3-kinase. Mn(2+) serves as cofactor.

It catalyses the reaction L-tyrosyl-[protein] + ATP = O-phospho-L-tyrosyl-[protein] + ADP + H(+). Inhibited by phosphorylation of Tyr-531 by leukocyte common antigen and activated by dephosphorylation of this site. Tyrosine-protein kinase implicated in the control of cell growth. Plays a role in the regulation of intracellular calcium levels. Required in brain development and mature brain function with important roles in the regulation of axon growth, axon guidance, and neurite extension. The polypeptide is Tyrosine-protein kinase Fyn (fyn) (Xiphophorus hellerii (Green swordtail)).